The primary structure comprises 526 residues: NAD(P)H-quinone oxidoreductase chain 4 1 (526 aa).

14 consecutive transmembrane segments (helical) span residues 7–27 (FPWL…IPLL), 35–55 (WYAL…FGWH), 86–106 (LSFP…VAAW), 114–134 (LFFF…LAQD), 135–155 (LLLF…LIAI), 168–188 (FILY…AMAF), 208–228 (ALQI…LPVF), 242–262 (SAPI…YGLI), 276–296 (FAPV…LAAL), 310–330 (IAHM…GLNG), 331–351 (ALLQ…LTGI), 374–396 (AFAL…GFVG), 417–437 (GIAL…LSML), and 463–483 (MAVA…PRLA).

Belongs to the complex I subunit 4 family.

The protein localises to the cellular thylakoid membrane. It catalyses the reaction a plastoquinone + NADH + (n+1) H(+)(in) = a plastoquinol + NAD(+) + n H(+)(out). The catalysed reaction is a plastoquinone + NADPH + (n+1) H(+)(in) = a plastoquinol + NADP(+) + n H(+)(out). NDH-1 shuttles electrons from NAD(P)H, via FMN and iron-sulfur (Fe-S) centers, to quinones in the respiratory chain. The immediate electron acceptor for the enzyme in this species is believed to be plastoquinone. Couples the redox reaction to proton translocation (for every two electrons transferred, four hydrogen ions are translocated across the cytoplasmic membrane), and thus conserves the redox energy in a proton gradient. This Synechococcus sp. (strain JA-3-3Ab) (Cyanobacteria bacterium Yellowstone A-Prime) protein is NAD(P)H-quinone oxidoreductase chain 4 1.